We begin with the raw amino-acid sequence, 370 residues long: Aminomethyltransferase (370 aa).

This sequence belongs to the GcvT family. In terms of assembly, the glycine cleavage system is composed of four proteins: P, T, L and H.

The enzyme catalyses N(6)-[(R)-S(8)-aminomethyldihydrolipoyl]-L-lysyl-[protein] + (6S)-5,6,7,8-tetrahydrofolate = N(6)-[(R)-dihydrolipoyl]-L-lysyl-[protein] + (6R)-5,10-methylene-5,6,7,8-tetrahydrofolate + NH4(+). Its function is as follows. The glycine cleavage system catalyzes the degradation of glycine. This chain is Aminomethyltransferase, found in Prochlorococcus marinus (strain MIT 9215).